The sequence spans 605 residues: E3 ubiquitin-protein ligase synoviolin A (605 aa).

Residues 1–19 (MTGASLALTAAVVAHAYYL) traverse the membrane as a helical segment. At 20–35 (KNQFYPTVVYLTKSSP) the chain is on the lumenal side. A helical transmembrane segment spans residues 36–56 (SMAVLYIQAFVLVFLLGKFMG). Residues 57 to 92 (KVFFGQLRAAEMEHLLERSWYAVTETCLAFTVFRDD) are Cytoplasmic-facing. Residues 93 to 113 (FSPRFVALFTLLLFLKCFHWL) traverse the membrane as a helical segment. Residues 114–129 (AEDRVDFMERSPNISW) are Lumenal-facing. A helical membrane pass occupies residues 130-150 (LFHFRILALMLLLGVLDAFFV). The Cytoplasmic segment spans residues 151–163 (SHAYHSLVIRGAS). Residues 164-184 (VQLVFGFEYAILMTVILTVFI) traverse the membrane as a helical segment. Residues 185-218 (KYILHSVDLQSENPWDNKAVYMLYTELFTGFIKV) lie on the Lumenal side of the membrane. A helical transmembrane segment spans residues 219–239 (LLYVAFMTIMVKVHTFPLFAI). The segment at 230-264 (KVHTFPLFAIRPMYLAMRQFKKAVTDAIMSRRAIR) is interaction with p53/TP53. Residues 240-605 (RPMYLAMRQF…KLETGTTDSQ (366 aa)) are Cytoplasmic-facing. Zn(2+) contacts are provided by C285, C288, C301, H303, H306, C309, C320, and C323. The RING-type; atypical zinc-finger motif lies at 285–324 (CIICREEMVTGAKRLPCNHIFHTSCLRSWFQRQQTCPTCR). Positions 334-355 (TQPQTPTEQQNQHQNQAQQQPT) are enriched in low complexity. The disordered stretch occupies residues 334–433 (TQPQTPTEQQ…QPGAALPGFP (100 aa)). Residues 356–391 (PVIPPQPNFPPGILPPFPPGMFPLWPPMGPFPPVPG) show a composition bias toward pro residues. The segment covering 403–414 (PGSSSGSSPRPG) has biased composition (low complexity). The span at 415 to 424 (ETSNVGSESQ) shows a compositional bias: polar residues. Positions 465–496 (EELRAMEGHERQNLEARLQCLQNIHTLLDAAM) form a coiled coil. Positions 513-605 (QPPISSTSTS…KLETGTTDSQ (93 aa)) are disordered. Positions 516–539 (ISSTSTSTSSAASASTAPTTSNIS) are enriched in low complexity. The span at 546-555 (DTTSTVTNTE) shows a compositional bias: polar residues. A compositionally biased stretch (low complexity) spans 556-579 (SSQQSAPPAPVSVETLSGAEGGET).

This sequence belongs to the HRD1 family. As to quaternary structure, homodimer.

Its subcellular location is the endoplasmic reticulum membrane. The enzyme catalyses S-ubiquitinyl-[E2 ubiquitin-conjugating enzyme]-L-cysteine + [acceptor protein]-L-lysine = [E2 ubiquitin-conjugating enzyme]-L-cysteine + N(6)-ubiquitinyl-[acceptor protein]-L-lysine.. It participates in protein modification; protein ubiquitination. E3 ubiquitin-protein ligase which accepts ubiquitin specifically from endoplasmic reticulum-associated UBC7 E2 ligase and transfers it to substrates, promoting their degradation. Component of the endoplasmic reticulum quality control (ERQC) system also called ER-associated degradation (ERAD) involved in ubiquitin-dependent degradation of misfolded endoplasmic reticulum proteins. Also promotes the degradation of normal but naturally short-lived proteins. Protects cells from ER stress-induced apoptosis. Sequesters p53 in the cytoplasm and promotes its degradation, thereby negatively regulating its biological function in transcription, cell cycle regulation and apoptosis. The protein is E3 ubiquitin-protein ligase synoviolin A (syvn1-a) of Xenopus laevis (African clawed frog).